A 177-amino-acid chain; its full sequence is Protein TERMINAL FLOWER 1 (177 aa).

Belongs to the phosphatidylethanolamine-binding protein family. As to expression, expressed below the apical dome of inflorescence and coflorescence meristems, and in inflorescence stem.

It localises to the cytoplasm. Functionally, controls inflorescence meristem identity and is required for maintenance of an indeterminate inflorescence. Prevents the expression of 'APETALA1' and 'LEAFY'. Also plays a role in the regulation of the time of flowering in the long-day flowering pathway. May form complexes with phosphorylated ligands by interfering with kinases and their effectors. The protein is Protein TERMINAL FLOWER 1 (TFL1) of Arabidopsis thaliana (Mouse-ear cress).